Reading from the N-terminus, the 138-residue chain is ATP synthase epsilon chain (138 aa).

Belongs to the ATPase epsilon chain family. As to quaternary structure, F-type ATPases have 2 components, CF(1) - the catalytic core - and CF(0) - the membrane proton channel. CF(1) has five subunits: alpha(3), beta(3), gamma(1), delta(1), epsilon(1). CF(0) has three main subunits: a, b and c.

The protein localises to the cell membrane. Its function is as follows. Produces ATP from ADP in the presence of a proton gradient across the membrane. The polypeptide is ATP synthase epsilon chain (Streptococcus equinus (Streptococcus bovis)).